The chain runs to 184 residues: Probable chemoreceptor glutamine deamidase CheD (184 aa).

Belongs to the CheD family.

It catalyses the reaction L-glutaminyl-[protein] + H2O = L-glutamyl-[protein] + NH4(+). In terms of biological role, probably deamidates glutamine residues to glutamate on methyl-accepting chemotaxis receptors (MCPs), playing an important role in chemotaxis. This Rhizobium leguminosarum bv. trifolii (strain WSM2304) protein is Probable chemoreceptor glutamine deamidase CheD.